Consider the following 932-residue polypeptide: MTDYKATLNLPQTSFAMKANLAQREPGMLKQWQQSKLYEQIREARKGREQFILHDGPPYANGDIHIGHAVNKILKDIIIKAKTLSGFDAPYVPGWDCHGLPIEHNVEKKVGKAGVKIDHVAFRQKCRDYARKQVEGQKKDFIRLGVLGEWDTPYLTMDFKTEADTVRALGKIVENGHLHKGFKPVYWSVVGASALAEAEVEYQDKTSFAIDVCFGVADVEDFAARVGSVAGTGNISVVIWTTTPWTLPANQAVSVNGELDYVVVQHGEQRLVLAEALVESVAKRLGVEELATVATFKGAAIEGLKLNHPFYAKQVPVLLGDHVTTDAGTGCVHTAPDHGADDFVVSNKYGIETLNYVDENGIYRDNVEIFAGDHVYKVDEKVIGLLEENGRLLHQAKLVHSFPHCWRTKTPLIFRATPQWFVSMTKNNLLKDVKQAVEGVNWVPDWGRARIDSMLDSSPDWCISRQRTWGVPITLFVHKETQELHPNTAALVEDVAKRIEEKGMDAWFELDAVELLGDEADQYQKVTDTLDVWFDSGVTHYSVVNARENLRYPADLYLEGSDQHRGWFQSSLKTSMAINGSAPYKQVLTHGFTVDADGKKMSKSIGNTVSPQKVMNDLGADVLRLWVAATDFSGDMSVSDEILKRTADSYRRIRNTARFFLSNLTGFNPQTDLLPAEEMLSLDRWAVDRAAALQADILKSYDTYQLHQIYQKLHNFCVVEMGGFYLDIIKDRQYTTKETSHARRSAQSALYHIVEAFVRWIAPICSFTADEIWQAMPGEKTGTVFTAEWYNLPRLAEGAELGNSYWQFIAKVKTAVNKTIEAKRSAGEVGGSLAAEVTLYCSESVAQKLTLLKDELRFVLICSSVTVVAASETEGEATEVEGLRVAVAKSSHEKCARCWHHREDVGQNTAHPEICGRCVENIDGEGESREFA.

A 'HIGH' region motif is present at residues 58–68 (PYANGDIHIGH). Glu-559 contacts L-isoleucyl-5'-AMP. The short motif at 600–604 (KMSKS) is the 'KMSKS' region element. Lys-603 is an ATP binding site. Cys-895, Cys-898, Cys-915, and Cys-918 together coordinate Zn(2+).

It belongs to the class-I aminoacyl-tRNA synthetase family. IleS type 1 subfamily. As to quaternary structure, monomer. Zn(2+) is required as a cofactor.

It is found in the cytoplasm. It carries out the reaction tRNA(Ile) + L-isoleucine + ATP = L-isoleucyl-tRNA(Ile) + AMP + diphosphate. Its function is as follows. Catalyzes the attachment of isoleucine to tRNA(Ile). As IleRS can inadvertently accommodate and process structurally similar amino acids such as valine, to avoid such errors it has two additional distinct tRNA(Ile)-dependent editing activities. One activity is designated as 'pretransfer' editing and involves the hydrolysis of activated Val-AMP. The other activity is designated 'posttransfer' editing and involves deacylation of mischarged Val-tRNA(Ile). This chain is Isoleucine--tRNA ligase, found in Saccharophagus degradans (strain 2-40 / ATCC 43961 / DSM 17024).